The sequence spans 343 residues: Methionine import ATP-binding protein MetN (343 aa).

The region spanning 2–241 (IKLFHINKIF…PKTPIAQAFI (240 aa)) is the ABC transporter domain. Residue 38–45 (GSSGAGKS) participates in ATP binding.

Belongs to the ABC transporter superfamily. Methionine importer (TC 3.A.1.24) family. As to quaternary structure, the complex is composed of two ATP-binding proteins (MetN), two transmembrane proteins (MetI) and a solute-binding protein (MetQ).

It localises to the cell inner membrane. The catalysed reaction is L-methionine(out) + ATP + H2O = L-methionine(in) + ADP + phosphate + H(+). It catalyses the reaction D-methionine(out) + ATP + H2O = D-methionine(in) + ADP + phosphate + H(+). Part of the ABC transporter complex MetNIQ involved in methionine import. Responsible for energy coupling to the transport system. The polypeptide is Methionine import ATP-binding protein MetN (Photorhabdus laumondii subsp. laumondii (strain DSM 15139 / CIP 105565 / TT01) (Photorhabdus luminescens subsp. laumondii)).